Here is a 734-residue protein sequence, read N- to C-terminus: Sulfate transporter (734 aa).

Residues 1 to 18 (MSLKNEDQNDLSPKDSVK) are compositionally biased toward basic and acidic residues. The segment at 1-38 (MSLKNEDQNDLSPKDSVKGNDQYRAPSGIHLEPEEESR) is disordered. A phosphoserine mark is found at Ser-12 and Ser-16. 2 helical membrane passes run 113–133 (VMSG…YSLL) and 138–158 (PIYG…LGTS). N-linked (GlcNAc...) asparagine glycosylation is present at Asn-194. 6 consecutive transmembrane segments (helical) span residues 214 to 234 (IIVG…MGFF), 237 to 257 (GFVS…GASF), 379 to 399 (VDAI…SEMF), 415 to 435 (AIGF…SAAL), 453 to 473 (VMTA…FFSL), and 519 to 539 (LIST…CVIL). Positions 563–714 (AYKNLQAKSG…YSIYEAMTFA (152 aa)) constitute an STAS domain.

The protein belongs to the SLC26A/SulP transporter (TC 2.A.53) family. N-glycosylated.

It is found in the cell membrane. It localises to the apical cell membrane. The enzyme catalyses oxalate(in) + sulfate(out) = oxalate(out) + sulfate(in). It carries out the reaction sulfate(out) + 2 chloride(in) = sulfate(in) + 2 chloride(out). It catalyses the reaction oxalate(out) + 2 chloride(in) = oxalate(in) + 2 chloride(out). The catalysed reaction is bromide(in) + chloride(out) = bromide(out) + chloride(in). The enzyme catalyses nitrate(in) + chloride(out) = nitrate(out) + chloride(in). It carries out the reaction iodide(in) + chloride(out) = iodide(out) + chloride(in). In terms of biological role, sulfate transporter which mediates sulfate uptake into chondrocytes in order to maintain adequate sulfation of proteoglycans which is needed for cartilage development. Mediates electroneutral anion exchange of sulfate ions for oxalate ions, sulfate and oxalate ions for chloride and/or hydroxyl ions and chloride ions for bromide, iodide and nitrate ions. The coupling of sulfate transport to both hydroxyl and chloride ions likely serves to ensure transport at both acidic pH when most sulfate uptake is mediated by sulfate-hydroxide exchange and alkaline pH when most sulfate uptake is mediated by sulfate-chloride exchange. Essential for chondrocyte proliferation, differentiation and cell size expansion. The sequence is that of Sulfate transporter (SLC26A2) from Bos taurus (Bovine).